We begin with the raw amino-acid sequence, 194 residues long: HTH-type nicotine-responsive transcriptional repressor HdnoR (194 aa).

An HTH tetR-type domain is found at Val-6 to Leu-66. The segment at residues Ser-29–Phe-48 is a DNA-binding region (H-T-H motif).

Homodimer.

6-hydroxy-D-nicotine and 6-hydroxy-L-nicotine prevent HdnoR from binding to the IR1 DNA. Both 6-hydroxy-nicotine enantiomers prevent DNA-protein complex formation at micromolar concentrations, with the D-enantiomer being twice as potent as the L-enantiomer. A thousand-fold higher L-nicotine concentration is required to elicit a similar effect. Functionally, represses expression of the 6-hydroxy-D-nicotine oxidase (6-hdno). Acts by binding to a gene operator site consisting of two inverted repeats, IR1 (covering the 6-hdno promoter region) and IR2 (situated upstream from the 6-hdno promoter). Binding to one site may stimulate binding of the protein to the second site. The sequence is that of HTH-type nicotine-responsive transcriptional repressor HdnoR from Paenarthrobacter nicotinovorans (Arthrobacter nicotinovorans).